The following is a 145-amino-acid chain: 3-dehydroquinate dehydratase 1 (145 aa).

Tyrosine 24 serves as the catalytic Proton acceptor. Positions 75, 81, and 88 each coordinate substrate. The Proton donor role is filled by histidine 101. Residues isoleucine 102–serine 103 and arginine 112 each bind substrate.

Belongs to the type-II 3-dehydroquinase family. As to quaternary structure, homododecamer.

The enzyme catalyses 3-dehydroquinate = 3-dehydroshikimate + H2O. Its pathway is metabolic intermediate biosynthesis; chorismate biosynthesis; chorismate from D-erythrose 4-phosphate and phosphoenolpyruvate: step 3/7. Functionally, catalyzes a trans-dehydration via an enolate intermediate. This Agrobacterium fabrum (strain C58 / ATCC 33970) (Agrobacterium tumefaciens (strain C58)) protein is 3-dehydroquinate dehydratase 1 (aroQ1).